Here is a 387-residue protein sequence, read N- to C-terminus: Succinate--CoA ligase [ADP-forming] subunit beta (387 aa).

In terms of domain architecture, ATP-grasp spans 9–236; it reads KELFAKHNVP…KDATDPLELK (228 aa). ATP-binding positions include Lys45, 52–54, Ser94, and Glu99; that span reads GRG. Residues Asn191 and Asp205 each contribute to the Mg(2+) site. Residues Asn256 and 318–320 each bind substrate; that span reads GIT.

It belongs to the succinate/malate CoA ligase beta subunit family. In terms of assembly, heterotetramer of two alpha and two beta subunits. It depends on Mg(2+) as a cofactor.

It carries out the reaction succinate + ATP + CoA = succinyl-CoA + ADP + phosphate. The catalysed reaction is GTP + succinate + CoA = succinyl-CoA + GDP + phosphate. It functions in the pathway carbohydrate metabolism; tricarboxylic acid cycle; succinate from succinyl-CoA (ligase route): step 1/1. In terms of biological role, succinyl-CoA synthetase functions in the citric acid cycle (TCA), coupling the hydrolysis of succinyl-CoA to the synthesis of either ATP or GTP and thus represents the only step of substrate-level phosphorylation in the TCA. The beta subunit provides nucleotide specificity of the enzyme and binds the substrate succinate, while the binding sites for coenzyme A and phosphate are found in the alpha subunit. This chain is Succinate--CoA ligase [ADP-forming] subunit beta, found in Mycolicibacterium gilvum (strain PYR-GCK) (Mycobacterium gilvum (strain PYR-GCK)).